Consider the following 231-residue polypeptide: Large ribosomal subunit protein uL1 (231 aa).

This sequence belongs to the universal ribosomal protein uL1 family. In terms of assembly, part of the 50S ribosomal subunit.

Binds directly to 23S rRNA. The L1 stalk is quite mobile in the ribosome, and is involved in E site tRNA release. Functionally, protein L1 is also a translational repressor protein, it controls the translation of the L11 operon by binding to its mRNA. This Buchnera aphidicola subsp. Acyrthosiphon pisum (strain 5A) protein is Large ribosomal subunit protein uL1.